A 432-amino-acid polypeptide reads, in one-letter code: Homogentisate 1,2-dioxygenase (432 aa).

The Proton acceptor role is filled by His287. His330 and Glu336 together coordinate Fe cation. Positions 345 and 366 each coordinate homogentisate. His366 contacts Fe cation.

Belongs to the homogentisate dioxygenase family. Hexamer; dimer of trimers. Requires Fe cation as cofactor.

It catalyses the reaction homogentisate + O2 = 4-maleylacetoacetate + H(+). It participates in amino-acid degradation; L-phenylalanine degradation; acetoacetate and fumarate from L-phenylalanine: step 4/6. Involved in the catabolism of homogentisate (2,5-dihydroxyphenylacetate or 2,5-OH-PhAc), a central intermediate in the degradation of phenylalanine and tyrosine. Catalyzes the oxidative ring cleavage of the aromatic ring of homogentisate to yield maleylacetoacetate. The sequence is that of Homogentisate 1,2-dioxygenase from Pseudomonas aeruginosa (strain UCBPP-PA14).